Reading from the N-terminus, the 181-residue chain is MKASISIDEKKDFIRWFLNKHQMKTREAMWVLNYIAGHDQIVKYVHFVDNLEGCARGLSLSAHGVESEPFLFFKGNIMTTDPEKAFHDIRLNWDEELYVELHFEEAMSSPEYALVREDNPFAAVKLADEEKEMADALIYQSVHQFSREKVLQQIDEALDTRDEAAFHKLVRILQQMDTEKE.

This sequence belongs to the UPF0302 family.

This Listeria monocytogenes serovar 1/2a (strain ATCC BAA-679 / EGD-e) protein is UPF0302 protein lmo1921.